The primary structure comprises 260 residues: Acetylglutamate kinase (260 aa).

Residues 41–42 (GG), Arg63, and Asn157 each bind substrate.

Belongs to the acetylglutamate kinase family. ArgB subfamily.

The protein resides in the cytoplasm. The enzyme catalyses N-acetyl-L-glutamate + ATP = N-acetyl-L-glutamyl 5-phosphate + ADP. It participates in amino-acid biosynthesis; L-arginine biosynthesis; N(2)-acetyl-L-ornithine from L-glutamate: step 2/4. Catalyzes the ATP-dependent phosphorylation of N-acetyl-L-glutamate. The chain is Acetylglutamate kinase from Acidobacterium capsulatum (strain ATCC 51196 / DSM 11244 / BCRC 80197 / JCM 7670 / NBRC 15755 / NCIMB 13165 / 161).